The following is a 344-amino-acid chain: Mitochondrial mRNA pseudouridine synthase Rpusd3 (344 aa).

The N-terminal 36 residues, 1 to 36 (MGALRVLRYVSMIWRPELGSCARQRDAGFGTEARRP), are a transit peptide targeting the mitochondrion. A disordered region spans residues 25–53 (RDAGFGTEARRPSQPHRSSKHKDLVEDQP).

It belongs to the pseudouridine synthase RluA family. As to quaternary structure, forms a regulatory protein-RNA complex, consisting of RCC1L, NGRN, RPUSD3, RPUSD4, TRUB2, FASTKD2 and 16S mt-rRNA.

The protein localises to the mitochondrion matrix. It catalyses the reaction a uridine in mRNA = a pseudouridine in mRNA. Catalyzes uridine to pseudouridine isomerization (pseudouridylation) of specific mitochondrial mRNAs (mt-mRNAs), a post-transcriptional modification necessary for their translation. Acts at position 390 in COXI mt-mRNA and at position 697-699 in mitochondrial COXIII mt-mRNA. As a component of a functional protein-RNA module, consisting of RCC1L, NGRN, RPUSD3, RPUSD4, TRUB2, FASTKD2 and 16S mitochondrial ribosomal RNA (16S mt-rRNA), controls 16S mt-rRNA abundance and may play a role in mitochondrial ribosome biogenesis. The polypeptide is Mitochondrial mRNA pseudouridine synthase Rpusd3 (Rpusd3) (Mus musculus (Mouse)).